Here is a 391-residue protein sequence, read N- to C-terminus: Na(+)/H(+) antiporter NhaA 1 (391 aa).

The next 11 membrane-spanning stretches (helical) occupy residues 19-39, 56-76, 98-118, 128-148, 157-177, 180-200, 208-228, 264-284, 297-317, 335-355, and 364-384; these read FLASESAGGIVLMAAALAALI, VWLGLSVELWINDGLMAIFFL, ALPGFAAAGGMLVPALIYIAI, GWAIPAATDIAFALGVLSLLG, VFLAALAILDDLGAVTIIAFF, SGLNLPMLAAAFATLAVLIAL, LLPYLLLGALLWFFVLQSGVH, VAFAVVPIFGFANAGVSLSGI, VALGLFVGKQIGVFLAAVLAI, GVAILCGIGFTMSLFIGNLAF, and EVKVGVLIGSGLAAIAGILLL.

It belongs to the NhaA Na(+)/H(+) (TC 2.A.33) antiporter family.

Its subcellular location is the cell inner membrane. It carries out the reaction Na(+)(in) + 2 H(+)(out) = Na(+)(out) + 2 H(+)(in). In terms of biological role, na(+)/H(+) antiporter that extrudes sodium in exchange for external protons. The sequence is that of Na(+)/H(+) antiporter NhaA 1 from Pseudomonas savastanoi pv. phaseolicola (strain 1448A / Race 6) (Pseudomonas syringae pv. phaseolicola (strain 1448A / Race 6)).